We begin with the raw amino-acid sequence, 102 residues long: Thioredoxin (102 aa).

The region spanning 1–102 is the Thioredoxin domain; that stretch reads MVQVVSQENF…SLIKLISKHQ (102 aa). C28 and C31 form a disulfide bridge.

The protein belongs to the thioredoxin family.

In terms of biological role, participates in various redox reactions through the reversible oxidation of its active center dithiol to a disulfide and catalyzes dithiol-disulfide exchange reactions. This chain is Thioredoxin (trxA), found in Chlamydia trachomatis serovar D (strain ATCC VR-885 / DSM 19411 / UW-3/Cx).